Here is a 264-residue protein sequence, read N- to C-terminus: 3-deoxy-manno-octulosonate cytidylyltransferase (264 aa).

Belongs to the KdsB family.

The protein resides in the cytoplasm. The enzyme catalyses 3-deoxy-alpha-D-manno-oct-2-ulosonate + CTP = CMP-3-deoxy-beta-D-manno-octulosonate + diphosphate. It functions in the pathway nucleotide-sugar biosynthesis; CMP-3-deoxy-D-manno-octulosonate biosynthesis; CMP-3-deoxy-D-manno-octulosonate from 3-deoxy-D-manno-octulosonate and CTP: step 1/1. The protein operates within bacterial outer membrane biogenesis; lipopolysaccharide biosynthesis. Its function is as follows. Activates KDO (a required 8-carbon sugar) for incorporation into bacterial lipopolysaccharide in Gram-negative bacteria. In Marinomonas sp. (strain MWYL1), this protein is 3-deoxy-manno-octulosonate cytidylyltransferase.